Here is a 355-residue protein sequence, read N- to C-terminus: GTPase Obg (355 aa).

The 159-residue stretch at M1–L159 folds into the Obg domain. The OBG-type G domain occupies A160–D342. GTP is bound by residues G166–S173, F191–Y195, D213–G216, N292–D295, and S323–L325. 2 residues coordinate Mg(2+): S173 and T193.

Belongs to the TRAFAC class OBG-HflX-like GTPase superfamily. OBG GTPase family. As to quaternary structure, monomer. Mg(2+) is required as a cofactor.

Its subcellular location is the cytoplasm. Functionally, an essential GTPase which binds GTP, GDP and possibly (p)ppGpp with moderate affinity, with high nucleotide exchange rates and a fairly low GTP hydrolysis rate. Plays a role in control of the cell cycle, stress response, ribosome biogenesis and in those bacteria that undergo differentiation, in morphogenesis control. The protein is GTPase Obg of Xanthomonas euvesicatoria pv. vesicatoria (strain 85-10) (Xanthomonas campestris pv. vesicatoria).